The sequence spans 100 residues: Urease subunit gamma (100 aa).

It belongs to the urease gamma subunit family. Heterotrimer of UreA (gamma), UreB (beta) and UreC (alpha) subunits. Three heterotrimers associate to form the active enzyme.

The protein localises to the cytoplasm. It catalyses the reaction urea + 2 H2O + H(+) = hydrogencarbonate + 2 NH4(+). It participates in nitrogen metabolism; urea degradation; CO(2) and NH(3) from urea (urease route): step 1/1. The polypeptide is Urease subunit gamma (Prochlorococcus marinus subsp. pastoris (strain CCMP1986 / NIES-2087 / MED4)).